The primary structure comprises 124 residues: Small ribosomal subunit protein uS12 (124 aa).

Asp-89 carries the 3-methylthioaspartic acid modification. The segment at 103–124 (DTAGVQNRNRGRSKYGAKRPKK) is disordered. Residues 111–124 (NRGRSKYGAKRPKK) are compositionally biased toward basic residues.

It belongs to the universal ribosomal protein uS12 family. In terms of assembly, part of the 30S ribosomal subunit. Contacts proteins S8 and S17. May interact with IF1 in the 30S initiation complex.

In terms of biological role, with S4 and S5 plays an important role in translational accuracy. Interacts with and stabilizes bases of the 16S rRNA that are involved in tRNA selection in the A site and with the mRNA backbone. Located at the interface of the 30S and 50S subunits, it traverses the body of the 30S subunit contacting proteins on the other side and probably holding the rRNA structure together. The combined cluster of proteins S8, S12 and S17 appears to hold together the shoulder and platform of the 30S subunit. This is Small ribosomal subunit protein uS12 from Desulforudis audaxviator (strain MP104C).